Consider the following 55-residue polypeptide: Large ribosomal subunit protein bL33 (55 aa).

This sequence belongs to the bacterial ribosomal protein bL33 family.

This chain is Large ribosomal subunit protein bL33, found in Rhodospirillum centenum (strain ATCC 51521 / SW).